The sequence spans 574 residues: Membrane protein insertase YidC (574 aa).

The helical transmembrane segment at 6-26 (VFLIFAWLMVAALLWMEWGKD) threads the bilayer. Residues 45-77 (RDPDAAAPSAANVPSAQPIPQAGAPGTVPATSS) form a disordered region. Helical transmembrane passes span 356–376 (FSIM…LHSF), 380–400 (WGWA…PLSA), 447–467 (GGCL…WVLV), 489–509 (PYFI…KLTP), and 525–545 (PLVF…YWVV).

The protein belongs to the OXA1/ALB3/YidC family. Type 1 subfamily. As to quaternary structure, interacts with the Sec translocase complex via SecD. Specifically interacts with transmembrane segments of nascent integral membrane proteins during membrane integration.

Its subcellular location is the cell inner membrane. In terms of biological role, required for the insertion and/or proper folding and/or complex formation of integral membrane proteins into the membrane. Involved in integration of membrane proteins that insert both dependently and independently of the Sec translocase complex, as well as at least some lipoproteins. Aids folding of multispanning membrane proteins. In Xanthomonas euvesicatoria pv. vesicatoria (strain 85-10) (Xanthomonas campestris pv. vesicatoria), this protein is Membrane protein insertase YidC.